The following is a 266-amino-acid chain: Endoplasmic reticulum vesicle protein 25 (266 aa).

The signal sequence occupies residues 1–26 (MGSSPQSSTRTLLGLLFLLLVQLSSA). The Lumenal segment spans residues 27–188 (LKFDLHASSG…TNESTNERVK (162 aa)). The 91-residue stretch at 39–129 (ERCIRNFVFK…YKSVELDVEI (91 aa)) folds into the GOLD domain. A helical transmembrane segment spans residues 189–209 (WFAFGTMGMLVGLGVWQVVYL). Over 210–266 (RAYFRYVDFPVSWRVDGVVANCCSCCEQVEASYLRSSRVVFWSPLVMWTRLSWLILR) the chain is Cytoplasmic.

Belongs to the EMP24/GP25L family.

Its subcellular location is the endoplasmic reticulum membrane. The protein localises to the golgi apparatus membrane. Its function is as follows. Constituent of COPII-coated endoplasmic reticulum-derived transport vesicles. Required for efficient transport of a subset of secretory proteins to the Golgi. Facilitates retrograde transport from the Golgi to the endoplasmic reticulum. This is Endoplasmic reticulum vesicle protein 25 (erv25) from Aspergillus fumigatus (strain ATCC MYA-4609 / CBS 101355 / FGSC A1100 / Af293) (Neosartorya fumigata).